Here is a 339-residue protein sequence, read N- to C-terminus: DNA-directed RNA polymerase subunit alpha (339 aa).

The tract at residues 1–235 is alpha N-terminal domain (alpha-NTD); that stretch reads MVIQKNWQEL…DQLQVFVNFE (235 aa). Residues 251 to 339 form an alpha C-terminal domain (alpha-CTD) region; sequence FNPALLKKVD…DLAKRFEEHY (89 aa).

This sequence belongs to the RNA polymerase alpha chain family. As to quaternary structure, homodimer. The RNAP catalytic core consists of 2 alpha, 1 beta, 1 beta' and 1 omega subunit. When a sigma factor is associated with the core the holoenzyme is formed, which can initiate transcription.

It carries out the reaction RNA(n) + a ribonucleoside 5'-triphosphate = RNA(n+1) + diphosphate. Functionally, DNA-dependent RNA polymerase catalyzes the transcription of DNA into RNA using the four ribonucleoside triphosphates as substrates. The polypeptide is DNA-directed RNA polymerase subunit alpha (Methylobacterium radiotolerans (strain ATCC 27329 / DSM 1819 / JCM 2831 / NBRC 15690 / NCIMB 10815 / 0-1)).